The following is a 300-amino-acid chain: MGDKIVRATAANGGIRLVAVLTTDSSMEAKERHGLSYLTTSILGRAFSASLLLASSMKVMHGRVTLRVRSDGPLKGLLVDAGRDGKVRGYVGNPNLELDLVKTKQNQYSFDFTKALGTGYLNVIRDNGFGEPFTSTVELVNGNIAEDLASYLYHSEQTPSAVFIGEKIQNKNIISSGGLLAQVLPKKETDPLLVSLLEERCKEINSFSEDLFKSKDNLLSLIKNIFPDIDDKSISEKARTQEVRFECRCSRQRSLNAMKMLDKNELKDILIKEGKAELVCEFCKNKYLINSEEIKEMIKN.

2 cysteine pairs are disulfide-bonded: Cys-247–Cys-249 and Cys-280–Cys-283.

The protein belongs to the HSP33 family. In terms of processing, under oxidizing conditions two disulfide bonds are formed involving the reactive cysteines. Under reducing conditions zinc is bound to the reactive cysteines and the protein is inactive.

The protein resides in the cytoplasm. Its function is as follows. Redox regulated molecular chaperone. Protects both thermally unfolding and oxidatively damaged proteins from irreversible aggregation. Plays an important role in the bacterial defense system toward oxidative stress. In Prochlorococcus marinus subsp. pastoris (strain CCMP1986 / NIES-2087 / MED4), this protein is 33 kDa chaperonin.